The sequence spans 327 residues: Thioredoxin reductase sirT (327 aa).

FAD is bound by residues 15 to 18, 37 to 42, His-50, and Ala-115; these read AGPA and DTGVFR. Cysteines 139 and 142 form a disulfide. FAD contacts are provided by residues Asp-289 and 296-297; that span reads QV.

This sequence belongs to the class-II pyridine nucleotide-disulfide oxidoreductase family. Homodimer. Requires FAD as cofactor.

It functions in the pathway mycotoxin biosynthesis. Functionally, thioredoxin reductase; part of the gene cluster that mediates the biosynthesis of sirodesmin PL, an epipolythiodioxopiperazine (ETP) characterized by a disulfide bridged cyclic dipeptide and that acts as a phytotoxin which is involved in the blackleg didease of canola. SirD catalyzes the O-prenylation of L-tyrosine (L-Tyr) in the presence of dimethylallyl diphosphate (DMAPP) to yield 4-O-dimethylallyl-L-Tyr, and therefore represents probably the first pathway-specific enzyme in the biosynthesis of sirodesmin PL. 4-O-dimethylallyl-L-Tyr, then undergoes condensation with L-Ser in a reaction catalyzed by the non-ribosomal peptide synthase sirP to form the diketopiperazine (DKP) backbone. Further bishydroxylation of the DKP performed by the cytochrome P450 monooxygenase sirC leads to the production of the intermediate phomamide. This step is essential to form the reactive thiol group required for toxicity of sirodesmin PL. The next steps of sirodesmin biosynthesis are not well understood yet, but some predictions could be made from intermediate compounds identification. Phomamide is converted into phomalizarine via oxidation, probably by sirT. Further oxidation, methylation (by sirM or sirN) and reduction steps convert phomalizarine to deacetyl sirodesmin. Finally, acetyltransferase sirH probably acetylates deacetyl sirodesmin to produce sirodesmin PL. The polypeptide is Thioredoxin reductase sirT (Leptosphaeria maculans (Blackleg fungus)).